The sequence spans 65 residues: Large ribosomal subunit protein bL32 (65 aa).

The disordered stretch occupies residues 1 to 45 (MAVQQNKKTPSKRGMRRAHDVLKKPTFSVDFSSGETHRRHHVTPD).

This sequence belongs to the bacterial ribosomal protein bL32 family.

This is Large ribosomal subunit protein bL32 from Nitrosococcus oceani (strain ATCC 19707 / BCRC 17464 / JCM 30415 / NCIMB 11848 / C-107).